Consider the following 177-residue polypeptide: SKP1-like protein 15 (177 aa).

Residues 108–167 (ILAANYLNVEGLLGLTCQTVADYIKDKTPEEVRELFNIENDFTHEEEEEAIRKENAWAFE) are interaction with the F-box domain of F-box proteins.

This sequence belongs to the SKP1 family. In terms of assembly, part of a SCF (SKP1-cullin-F-box) protein ligase complex. Expressed at low levels in seedlings and leaves.

The protein localises to the nucleus. The protein operates within protein modification; protein ubiquitination. Its function is as follows. Involved in ubiquitination and subsequent proteasomal degradation of target proteins. Together with CUL1, RBX1 and a F-box protein, it forms a SCF E3 ubiquitin ligase complex. The functional specificity of this complex depends on the type of F-box protein. In the SCF complex, it serves as an adapter that links the F-box protein to CUL1. In Arabidopsis thaliana (Mouse-ear cress), this protein is SKP1-like protein 15 (ASK15).